The chain runs to 588 residues: Vesicular glutamate transporter 3 (588 aa).

The Cytoplasmic portion of the chain corresponds to 1–76; it reads MPFNAFDTFK…CSCCGIPKRY (76 aa). A helical transmembrane segment spans residues 77 to 97; the sequence is IIAVMSGLGFCISFGIRCNLG. Residues 98-130 lie on the Vesicular side of the membrane; that stretch reads VAIVEMVNNSTVYVDGKPEIQTAQFNWDPETVG. An N-linked (GlcNAc...) asparagine glycan is attached at asparagine 106. A helical membrane pass occupies residues 131-151; sequence LIHGSFFWGYIVTQIPGGFIS. Residues 152-153 lie on the Cytoplasmic side of the membrane; sequence NK. Residues 154–174 form a helical membrane-spanning segment; that stretch reads FAANRVFGAAIFLTSTLNMFI. Topologically, residues 175-182 are vesicular; the sequence is PSAARVHY. Residues 183 to 203 form a helical membrane-spanning segment; it reads GCVMCVRILQGLVEGVTYPAC. The Cytoplasmic portion of the chain corresponds to 204 to 221; that stretch reads HGMWSKWAPPLERSRLAT. Residues 222-242 form a helical membrane-spanning segment; it reads TSFCGSYAGAVVAMPLAGVLV. The Vesicular portion of the chain corresponds to 243–249; sequence QYIGWAS. Residues 250-270 traverse the membrane as a helical segment; sequence VFYIYGMFGIIWYMFWLLQAY. Over 271 to 314 the chain is Cytoplasmic; the sequence is ECPAVHPTISNEERTYIETSIGEGANLASLSKFNTPWRRFFTSL. A helical transmembrane segment spans residues 315–335; the sequence is PVYAIIVANFCRSWTFYLLLI. At 336-353 the chain is on the vesicular side; that stretch reads SQPAYFEEVFGFAISKVG. A helical membrane pass occupies residues 354-374; sequence LLSAVPHMVMTIVVPIGGQLA. Residues 375–390 are Cytoplasmic-facing; it reads DYLRSRKILTTTAVRK. The chain crosses the membrane as a helical span at residues 391-411; the sequence is IMNCGGFGMEATLLLVVGFSH. The Vesicular portion of the chain corresponds to 412–413; it reads TK. The helical transmembrane segment at 414–434 threads the bilayer; sequence GVAISFLVLAVGFSGFAISGF. Topologically, residues 435–447 are cytoplasmic; sequence NVNHLDIAPRYAS. The helical transmembrane segment at 448-468 threads the bilayer; the sequence is ILMGISNGVGTLSGMVCPLIV. Over 469–481 the chain is Vesicular; that stretch reads GAMTKHKTREEWQ. Residues 482–502 form a helical membrane-spanning segment; that stretch reads NVFLIAALVHYSGVIFYGVFA. Residues 503-585 are Cytoplasmic-facing; sequence SGEKQDWADP…LSYQNEEDFS (83 aa). Positions 539-588 are disordered; the sequence is FVSPRKKMSYGATTQNCEVQKTDRRQQRESAFEGEEPLSYQNEEDFSETS. Basic and acidic residues predominate over residues 558-569; the sequence is QKTDRRQQRESA. Positions 570-588 are enriched in acidic residues; that stretch reads FEGEEPLSYQNEEDFSETS.

Belongs to the major facilitator superfamily. Sodium/anion cotransporter family. VGLUT subfamily. Expressed in brain, kidney and liver. Expressed within the amygdala, brainstem, cerberal cortex, dorsal root ganglia, dorsal spinal cord, hippocampus, hypothalamus, retina, striatum and ventral spinal cord. Expressed within neurons of the caudate-putamen, olfactory tubercle, nucleus accumbens, hippocampus, interpeduncular nucleus and dorsal and medial raphe nuclei. Expressed in inner hair cells of the ear. Expressed at synaptic terminals within the lateral superior olive (LSO), a nucleus of the mammalian sound localization system, and in the medial nucleus of the trapezoid body (MNTB), which provides inhibitory input to the LSO.

It localises to the cytoplasmic vesicle. The protein localises to the secretory vesicle. The protein resides in the synaptic vesicle membrane. Its subcellular location is the cell membrane. It is found in the synapse. It localises to the synaptosome. The catalysed reaction is L-glutamate(out) = L-glutamate(in). It catalyses the reaction chloride(in) = chloride(out). It carries out the reaction 3 Na(+)(out) + phosphate(out) = 3 Na(+)(in) + phosphate(in). With respect to regulation, the L-glutamate uniporter activity exhibits a biphasic dependence on chloride concentration. Chloride channel activity is allosterically activated by lumenal H(+) and Cl(-) leading to synaptic vesicles acidification. The glutamate transport activity is allosterically activated by lumenal H(+) and Cl(-), preventing non-vesicular L-glutamate release. In terms of biological role, multifunctional transporter that transports L-glutamate as well as multiple ions such as chloride, sodium and phosphate. At the synaptic vesicle membrane, mainly functions as an uniporter that mediates the uptake of L-glutamate into synaptic vesicles at presynaptic nerve terminals of excitatory neural cells. The L-glutamate uniporter activity is electrogenic and is driven by the proton electrochemical gradient, mainly by the electrical gradient established by the vacuolar H(+)-ATPase across the synaptic vesicle membrane. In addition, functions as a chloride channel that allows a chloride permeation through the synaptic vesicle membrane that affects the proton electrochemical gradient and promotes synaptic vesicles acidification. At the plasma membrane, following exocytosis, functions as a symporter of Na(+) and phosphate from the extracellular space to the cytoplasm allowing synaptic phosphate homeostasis regulation. The symporter activity is electrogenic. Moreover, operates synergistically with SLC18A3/VACHT under a constant H(+) gradient, thereby allowing striatal vesicular acetylcholine uptake. This Rattus norvegicus (Rat) protein is Vesicular glutamate transporter 3.